A 1072-amino-acid polypeptide reads, in one-letter code: DNA-directed RNA polymerase subunit beta (1072 aa).

It belongs to the RNA polymerase beta chain family. In plastids the minimal PEP RNA polymerase catalytic core is composed of four subunits: alpha, beta, beta', and beta''. When a (nuclear-encoded) sigma factor is associated with the core the holoenzyme is formed, which can initiate transcription.

The protein localises to the plastid. The protein resides in the chloroplast. It catalyses the reaction RNA(n) + a ribonucleoside 5'-triphosphate = RNA(n+1) + diphosphate. DNA-dependent RNA polymerase catalyzes the transcription of DNA into RNA using the four ribonucleoside triphosphates as substrates. This Lobularia maritima (Sweet alyssum) protein is DNA-directed RNA polymerase subunit beta.